We begin with the raw amino-acid sequence, 336 residues long: MDFDAVLLLSFGGPEGPEQVRPFLENVTRGRGVPPERLDHVAEHYLHFGGVSPINGINRALIEQLRAAQDLPVYFGNRNWEPYVEDTVKVMRDNGIRRAAVFTTSAWSGYSSCTQYVEDIARARTAAGTGAPELVKLRPYFDHPLFVEMFAGAIADAAAKVPAGARLVFTAHSVPVAADERLGPRLYSRQVAYAARLVAAAAGYAEHDLVWQSRSGPPQVRWLEPDVADHLRALAESGTRAVIVCPIGFVADHIEVVWDLDEELRAQAESAGMLMARASTPNAQPRFARLAADLIDELRCGRTPARVTGPDPVPGCLASVNGAPCRPPHCAAQATG.

Ser52 and Tyr116 together coordinate Fe-coproporphyrin III. The Fe(2+) site is built by His172 and Glu255.

Belongs to the ferrochelatase family.

The protein resides in the cytoplasm. The enzyme catalyses Fe-coproporphyrin III + 2 H(+) = coproporphyrin III + Fe(2+). The protein operates within porphyrin-containing compound metabolism; protoheme biosynthesis. In terms of biological role, involved in coproporphyrin-dependent heme b biosynthesis. Catalyzes the insertion of ferrous iron into coproporphyrin III to form Fe-coproporphyrin III. This chain is Coproporphyrin III ferrochelatase, found in Mycolicibacterium paratuberculosis (strain ATCC BAA-968 / K-10) (Mycobacterium paratuberculosis).